We begin with the raw amino-acid sequence, 228 residues long: Flavin-dependent thymidylate synthase (228 aa).

Positions Met-1 to Phe-217 constitute a ThyX domain. Residues Thr-55, Arg-78 to Arg-80, and Glu-86 contribute to the FAD site. DUMP-binding positions include Gln-75–Arg-78, Glu-86–Arg-90, and Arg-156. Residues Arg-78–Ser-88 carry the ThyX motif motif. FAD-binding positions include Asn-172–Arg-174 and Asn-178. Arg-183 contributes to the dUMP binding site. Catalysis depends on Arg-183, which acts as the Involved in ionization of N3 of dUMP, leading to its activation.

Belongs to the thymidylate synthase ThyX family. Homotetramer. FAD is required as a cofactor.

The enzyme catalyses dUMP + (6R)-5,10-methylene-5,6,7,8-tetrahydrofolate + NADPH + H(+) = dTMP + (6S)-5,6,7,8-tetrahydrofolate + NADP(+). The protein operates within pyrimidine metabolism; dTTP biosynthesis. In terms of biological role, catalyzes the reductive methylation of 2'-deoxyuridine-5'-monophosphate (dUMP) to 2'-deoxythymidine-5'-monophosphate (dTMP) while utilizing 5,10-methylenetetrahydrofolate (mTHF) as the methyl donor, and NADPH and FADH(2) as the reductant. This chain is Flavin-dependent thymidylate synthase, found in Thermosipho africanus (strain TCF52B).